We begin with the raw amino-acid sequence, 91 residues long: MTKELCMRCYISGRVQGVWFRASAKNLAEQLMISGWARNLADGRVEVFACGKEDKLEEFYTWLQKGPLNARVDVCTRENLPWEDYISFDVL.

An Acylphosphatase-like domain is found at 6–91 (CMRCYISGRV…WEDYISFDVL (86 aa)). Catalysis depends on residues R21 and N39.

Belongs to the acylphosphatase family.

It carries out the reaction an acyl phosphate + H2O = a carboxylate + phosphate + H(+). In Legionella pneumophila subsp. pneumophila (strain Philadelphia 1 / ATCC 33152 / DSM 7513), this protein is Acylphosphatase (acyP).